The chain runs to 94 residues: Large ribosomal subunit protein uL23 (94 aa).

It belongs to the universal ribosomal protein uL23 family. As to quaternary structure, part of the 50S ribosomal subunit. Contacts protein L29, and trigger factor when it is bound to the ribosome.

In terms of biological role, one of the early assembly proteins it binds 23S rRNA. One of the proteins that surrounds the polypeptide exit tunnel on the outside of the ribosome. Forms the main docking site for trigger factor binding to the ribosome. This is Large ribosomal subunit protein uL23 from Symbiobacterium thermophilum (strain DSM 24528 / JCM 14929 / IAM 14863 / T).